The primary structure comprises 238 residues: Tetrahydromethanopterin S-methyltransferase subunit A 1 (238 aa).

Residues 2-218 (VEKKSPAEGW…RMFAGMYSGK (217 aa)) are Cytoplasmic-facing. H84 serves as a coordination point for 5-hydroxybenzimidazolylcob(I)amide. Residues 219 to 237 (VQGIMIGLAFTLTLGILLL) traverse the membrane as a helical segment. Residue V238 is a topological domain, extracellular.

It belongs to the MtrA family. In terms of assembly, the complex is composed of 8 subunits; MtrA, MtrB, MtrC, MtrD, MtrE, MtrF, MtrG and MtrH. It depends on 5-hydroxybenzimidazolylcob(I)amide as a cofactor.

It is found in the cell membrane. The enzyme catalyses 5-methyl-5,6,7,8-tetrahydromethanopterin + coenzyme M + 2 Na(+)(in) = 5,6,7,8-tetrahydromethanopterin + methyl-coenzyme M + 2 Na(+)(out). The protein operates within one-carbon metabolism; methanogenesis from CO(2); methyl-coenzyme M from 5,10-methylene-5,6,7,8-tetrahydromethanopterin: step 2/2. Its function is as follows. Part of a complex that catalyzes the formation of methyl-coenzyme M and tetrahydromethanopterin from coenzyme M and methyl-tetrahydromethanopterin. This is an energy-conserving, sodium-ion translocating step. The protein is Tetrahydromethanopterin S-methyltransferase subunit A 1 of Methanothermobacter marburgensis (strain ATCC BAA-927 / DSM 2133 / JCM 14651 / NBRC 100331 / OCM 82 / Marburg) (Methanobacterium thermoautotrophicum).